A 604-amino-acid polypeptide reads, in one-letter code: UvrABC system protein C (604 aa).

The GIY-YIG domain occupies 17–95; sequence AQPGVYRMLN…IKSLAPRYNI (79 aa). The 36-residue stretch at 204 to 239 folds into the UVR domain; that stretch reads DEVLKTIEQKMFTASDQQDYEQAAQLRDQMQALRKI.

The protein belongs to the UvrC family. As to quaternary structure, interacts with UvrB in an incision complex.

Its subcellular location is the cytoplasm. In terms of biological role, the UvrABC repair system catalyzes the recognition and processing of DNA lesions. UvrC both incises the 5' and 3' sides of the lesion. The N-terminal half is responsible for the 3' incision and the C-terminal half is responsible for the 5' incision. This is UvrABC system protein C from Nitrosomonas europaea (strain ATCC 19718 / CIP 103999 / KCTC 2705 / NBRC 14298).